The following is a 339-amino-acid chain: MKEQLNSIRVQAEQELSNVGTIAELENIRVKYLGKKGELTAVLRGMGSLSPEERPVIGQLANEIRAYIESRIEEARNELIKKERSQKLEREVIDVTMPGKRKMLGKKHPLSIVIDEIKDVFIGMGYEIAEGPEVELDYYNFEALNIPRNHPARDVQDTFYINNNILLRTQTSPVQIRVMENKKPPIKIICPGRVYRSDAVDATHSPIFHQVEGLVVDKGVTMGDLVGTLRVFAKSLFGEKTEIRLRPHHFPFTEPSAEVDVSCWACGGTGCRICKNEGWIEILGAGMVHPKVLEVCGIDPEVYSGFAFGLGVERTAMGRFNIDDMRLLYENDIRFLKQF.

Glu254 provides a ligand contact to Mg(2+).

Belongs to the class-II aminoacyl-tRNA synthetase family. Phe-tRNA synthetase alpha subunit type 1 subfamily. Tetramer of two alpha and two beta subunits. The cofactor is Mg(2+).

Its subcellular location is the cytoplasm. The enzyme catalyses tRNA(Phe) + L-phenylalanine + ATP = L-phenylalanyl-tRNA(Phe) + AMP + diphosphate + H(+). The chain is Phenylalanine--tRNA ligase alpha subunit from Acetivibrio thermocellus (strain ATCC 27405 / DSM 1237 / JCM 9322 / NBRC 103400 / NCIMB 10682 / NRRL B-4536 / VPI 7372) (Clostridium thermocellum).